The sequence spans 63 residues: Large ribosomal subunit protein uL29 (63 aa).

It belongs to the universal ribosomal protein uL29 family.

The sequence is that of Large ribosomal subunit protein uL29 from Pelagibacter ubique (strain HTCC1062).